An 868-amino-acid polypeptide reads, in one-letter code: Leucine--tRNA ligase (868 aa).

The short motif at 42 to 52 is the 'HIGH' region element; sequence PYPSGKLHMGH. A 'KMSKS' region motif is present at residues 627-631; it reads KMSKS. Lysine 630 contributes to the ATP binding site.

This sequence belongs to the class-I aminoacyl-tRNA synthetase family.

The protein resides in the cytoplasm. It catalyses the reaction tRNA(Leu) + L-leucine + ATP = L-leucyl-tRNA(Leu) + AMP + diphosphate. The sequence is that of Leucine--tRNA ligase from Pseudomonas syringae pv. tomato (strain ATCC BAA-871 / DC3000).